Here is a 187-residue protein sequence, read N- to C-terminus: GTP cyclohydrolase 1 (187 aa).

3 residues coordinate Zn(2+): cysteine 78, histidine 81, and cysteine 150.

This sequence belongs to the GTP cyclohydrolase I family. Homomer.

The catalysed reaction is GTP + H2O = 7,8-dihydroneopterin 3'-triphosphate + formate + H(+). The protein operates within cofactor biosynthesis; 7,8-dihydroneopterin triphosphate biosynthesis; 7,8-dihydroneopterin triphosphate from GTP: step 1/1. The protein is GTP cyclohydrolase 1 of Brevibacillus brevis (strain 47 / JCM 6285 / NBRC 100599).